Consider the following 619-residue polypeptide: UPF0329 protein ECU08_2070 (619 aa).

Basic and acidic residues-rich tracts occupy residues 350 to 359 (EREKREESKG) and 369 to 385 (GAGEAKEESKEEDRKEE). The disordered stretch occupies residues 350–425 (EREKREESKG…REKKMGEEHH (76 aa)). A compositionally biased stretch (acidic residues) spans 386–396 (EGVEVEEEESA).

Belongs to the UPF0329 family.

This is UPF0329 protein ECU08_2070 from Encephalitozoon cuniculi (strain GB-M1) (Microsporidian parasite).